Consider the following 466-residue polypeptide: MSTKNVRTEKDTFGPIDVPADRLWGAQTQRSLQNFAISTERMPLALIRALVLVKKAAARVNVENGSLAKEKGEAIIRAADEVLAGQHDAEFPLSVWQTGSGTQTNMNTNEVLANRASELLGGERGERRKVHPNDDVNKGQSSNDVFPTAMSVAAVAAITEHVLPELKALRDVLAQKARAFHDVVKVGRTHLQDATPLTLGQEVGGFVAQLDHAKGHLERTLPHLLELALGGTAVGTGLNAPKGYAERVAQELAQLTGHPFVTAPNKFEALAANDALVQAHGALKGLAAVLFKVANDVRWLSSGPRSGLAEITIPENEPGSSIMPGKVNPTQSEALTMLCAQVMGNDVAVTVGGASGNFQLNVFKPLIAHNLLQSCRLLADGMRSFRLHCAVGIEPNRPRIQENLERSLMLVTALNPHIGYDNAAKIAKTAHRDGTTLKETAVALGLVTPEQFDQWVRPEDMTGHKG.

Substrate is bound by residues 100–102 (SGT), Arg-128, 131–134 (HPND), 141–143 (SSN), and Thr-189. The segment covering 122–137 (GERGERRKVHPNDDVN) has biased composition (basic and acidic residues). The disordered stretch occupies residues 122–143 (GERGERRKVHPNDDVNKGQSSN). The active-site Proton donor/acceptor is His-190. Residue Ser-320 is part of the active site. Residues Ser-321 and 326–328 (KVN) contribute to the substrate site.

This sequence belongs to the class-II fumarase/aspartase family. Fumarase subfamily. In terms of assembly, homotetramer.

Its subcellular location is the cytoplasm. The catalysed reaction is (S)-malate = fumarate + H2O. The protein operates within carbohydrate metabolism; tricarboxylic acid cycle; (S)-malate from fumarate: step 1/1. Its function is as follows. Involved in the TCA cycle. Catalyzes the stereospecific interconversion of fumarate to L-malate. The chain is Fumarate hydratase class II from Myxococcus xanthus (strain DK1622).